The sequence spans 810 residues: Volume-regulated anion channel subunit LRRC8A (810 aa).

At Met-1 the chain carries N-acetylmethionine. Topologically, residues 1–23 (MIPVTELRYFADTQPAYRILKPW) are cytoplasmic. The chain crosses the membrane as a helical span at residues 24–47 (WDVFTDYISIVMLMIAVFGGTLQV). Over 48–123 (TQDKMICLPC…YENRLHWFAK (76 aa)) the chain is Extracellular. Intrachain disulfides connect Cys-54–Cys-310, Cys-57–Cys-65, and Cys-113–Cys-295. 2 N-linked (GlcNAc...) asparagine glycosylation sites follow: Asn-66 and Asn-83. The helical transmembrane segment at 124–142 (YFPYLVLLHTLIFLACSNF) threads the bilayer. Topologically, residues 143 to 264 (WFKFPRTSSK…EEGDIVYRLY (122 aa)) are cytoplasmic. A Phosphothreonine modification is found at Thr-200. At Ser-202 the chain carries Phosphoserine. Residue Thr-215 is modified to Phosphothreonine. Ser-217 is subject to Phosphoserine. A helical membrane pass occupies residues 265 to 286 (MRQTIIKVIKFILIICYTVYYV). Over 287–316 (HNIKFDVDCTVDIESLTGYRTYRCAHPLAT) the chain is Extracellular. The helical transmembrane segment at 317–341 (LFKILASFYISLVIFYGLICMYTLW) threads the bilayer. At 342–810 (WMLRRSLKKY…RLWRADKEQA (469 aa)) the chain is on the cytoplasmic side. LRR repeat units follow at residues 399–422 (ENKL…RLTK), 423–445 (NAQD…VFDL), 447–468 (ELEV…IAQL), 469–492 (TGLK…AFLR), 493–515 (ENLR…IYSL), 518–542 (LEEL…GLRE), 543–565 (LKRL…VTDV), 567–589 (VHLQ…SLKK), 590–613 (MANL…IFSL), 615–637 (NLQE…SFQH), 639–661 (HRLT…IGNL), 662–684 (TNLE…LFYC), 686–707 (KLRY…IGLL), 708–730 (QNLQ…LFQC), 732–753 (KLRA…VGEL), 754–776 (TNLT…LGEC), and 778–801 (LLKR…VKER). Residues 706-707 (LL) carry the Di-leucine motif motif.

It belongs to the LRRC8 family. In terms of assembly, heterohexamer; oligomerizes with other LRRC8 proteins (LRRC8B, LRRC8C, LRRC8D and/or LRRC8E) to form a heterohexamer. Can form homohexamers in vitro, but these have lower conductance than heterohexamers. In vivo, the subunit composition may depend primarily on expression levels, and heterooligomeric channels containing various proportions of the different LRRC8 proteins may coexist. Interact with GRB2. Interacts with NOX4; this interaction prevents the ubiquitin-mediated degradation of LRRC8A. In terms of processing, N-glycosylated. Expressed in brain, kidney, ovary, lung, liver, heart, and fetal brain and liver. Found at high levels in bone marrow; lower levels are detected in peripheral blood cells. Expressed on T-cells as well as on B-lineage cells.

The protein localises to the cell membrane. The protein resides in the lysosome membrane. The enzyme catalyses chloride(in) = chloride(out). The catalysed reaction is iodide(out) = iodide(in). It catalyses the reaction taurine(out) = taurine(in). It carries out the reaction L-aspartate(out) = L-aspartate(in). The enzyme catalyses L-glutamate(out) = L-glutamate(in). The catalysed reaction is myo-inositol(out) = myo-inositol(in). It catalyses the reaction 2',3'-cGAMP(out) = 2',3'-cGAMP(in). Its activity is regulated as follows. Inhibited by (4-[(2-butyl-6,7-dichloro-2-cyclopentyl-2,3-dihydro-1-oxo-1H-inden-5-yl)oxy]butanoic acid), which plugs the channel like a cork in a bottle by binding in the extracellular selectivity filter and sterically occluding ion conduction. Lipids may block conduction in closed heterohexameric channels. Its function is as follows. Essential component of the volume-regulated anion channel (VRAC, also named VSOAC channel), an anion channel required to maintain a constant cell volume in response to extracellular or intracellular osmotic changes. The VRAC channel conducts iodide better than chloride and can also conduct organic osmolytes like taurine. Mediates efflux of amino acids, such as aspartate and glutamate, in response to osmotic stress. LRRC8A and LRRC8D are required for the uptake of the drug cisplatin. In complex with LRRC8C or LRRC8E, acts as a transporter of immunoreactive cyclic dinucleotide GMP-AMP (2'-3'-cGAMP), an immune messenger produced in response to DNA virus in the cytosol: mediates both import and export of 2'-3'-cGAMP, thereby promoting transfer of 2'-3'-cGAMP to bystander cells. In contrast, complexes containing LRRC8D inhibit transport of 2'-3'-cGAMP. Required for in vivo channel activity, together with at least one other family member (LRRC8B, LRRC8C, LRRC8D or LRRC8E); channel characteristics depend on the precise subunit composition. Can form functional channels by itself (in vitro). Involved in B-cell development: required for the pro-B cell to pre-B cell transition. Also required for T-cell development. Required for myoblast differentiation: VRAC activity promotes membrane hyperpolarization and regulates insulin-stimulated glucose metabolism and oxygen consumption. Also acts as a regulator of glucose-sensing in pancreatic beta cells: VRAC currents, generated in response to hypotonicity- or glucose-induced beta cell swelling, depolarize cells, thereby causing electrical excitation, leading to increase glucose sensitivity and insulin secretion. Also plays a role in lysosome homeostasis by forming functional lysosomal VRAC channels in response to low cytoplasmic ionic strength condition: lysosomal VRAC channels are necessary for the formation of large lysosome-derived vacuoles, which store and then expel excess water to maintain cytosolic water homeostasis. Acts as a key factor in NLRP3 inflammasome activation by modulating itaconate efflux and mitochondria function. The chain is Volume-regulated anion channel subunit LRRC8A from Homo sapiens (Human).